A 143-amino-acid polypeptide reads, in one-letter code: Large ribosomal subunit protein uL11 (143 aa).

Belongs to the universal ribosomal protein uL11 family. As to quaternary structure, part of the ribosomal stalk of the 50S ribosomal subunit. Interacts with L10 and the large rRNA to form the base of the stalk. L10 forms an elongated spine to which L12 dimers bind in a sequential fashion forming a multimeric L10(L12)X complex. One or more lysine residues are methylated.

Its function is as follows. Forms part of the ribosomal stalk which helps the ribosome interact with GTP-bound translation factors. The chain is Large ribosomal subunit protein uL11 from Chromobacterium violaceum (strain ATCC 12472 / DSM 30191 / JCM 1249 / CCUG 213 / NBRC 12614 / NCIMB 9131 / NCTC 9757 / MK).